The primary structure comprises 326 residues: Protein FAM50 homolog (326 aa).

A disordered region spans residues 77–111 (ISNRDLQVARGDQSSSTQSKDSQEAREKEEHVAKH). The segment covering 97–109 (DSQEAREKEEHVA) has biased composition (basic and acidic residues).

It belongs to the FAM50 family.

The polypeptide is Protein FAM50 homolog (Caenorhabditis elegans).